A 220-amino-acid polypeptide reads, in one-letter code: Large ribosomal subunit protein uL16 (220 aa).

It belongs to the universal ribosomal protein uL16 family. Component of the large ribosomal subunit. Mature ribosomes consist of a small (40S) and a large (60S) subunit. The 40S subunit contains about 32 different proteins and 1 molecule of RNA (18S). The 60S subunit contains 45 different proteins and 3 molecules of RNA (25S, 5.8S and 5S).

It is found in the cytoplasm. In terms of biological role, component of the ribosome, a large ribonucleoprotein complex responsible for the synthesis of proteins in the cell. The small ribosomal subunit (SSU) binds messenger RNAs (mRNAs) and translates the encoded message by selecting cognate aminoacyl-transfer RNA (tRNA) molecules. The large subunit (LSU) contains the ribosomal catalytic site termed the peptidyl transferase center (PTC), which catalyzes the formation of peptide bonds, thereby polymerizing the amino acids delivered by tRNAs into a polypeptide chain. The nascent polypeptides leave the ribosome through a tunnel in the LSU and interact with protein factors that function in enzymatic processing, targeting, and the membrane insertion of nascent chains at the exit of the ribosomal tunnel. This chain is Large ribosomal subunit protein uL16, found in Candida albicans (strain SC5314 / ATCC MYA-2876) (Yeast).